The primary structure comprises 259 residues: uncharacterized protein (259 aa).

Helical transmembrane passes span isoleucine 9–leucine 31, leucine 84–phenylalanine 106, phenylalanine 126–glycine 148, serine 153–valine 175, histidine 196–alanine 215, and threonine 230–glycine 252.

It localises to the cell membrane. This is an uncharacterized protein from Archaeoglobus fulgidus (strain ATCC 49558 / DSM 4304 / JCM 9628 / NBRC 100126 / VC-16).